The primary structure comprises 264 residues: 3-methyl-2-oxobutanoate hydroxymethyltransferase (264 aa).

2 residues coordinate Mg(2+): Asp45 and Asp84. 3-methyl-2-oxobutanoate is bound by residues 45 to 46 (DS), Asp84, and Lys112. Glu114 contributes to the Mg(2+) binding site. Catalysis depends on Glu181, which acts as the Proton acceptor.

Belongs to the PanB family. In terms of assembly, homodecamer; pentamer of dimers. The cofactor is Mg(2+).

It localises to the cytoplasm. It catalyses the reaction 3-methyl-2-oxobutanoate + (6R)-5,10-methylene-5,6,7,8-tetrahydrofolate + H2O = 2-dehydropantoate + (6S)-5,6,7,8-tetrahydrofolate. It participates in cofactor biosynthesis; (R)-pantothenate biosynthesis; (R)-pantoate from 3-methyl-2-oxobutanoate: step 1/2. Catalyzes the reversible reaction in which hydroxymethyl group from 5,10-methylenetetrahydrofolate is transferred onto alpha-ketoisovalerate to form ketopantoate. This is 3-methyl-2-oxobutanoate hydroxymethyltransferase from Shewanella halifaxensis (strain HAW-EB4).